Consider the following 577-residue polypeptide: Endopolyphosphatase (577 aa).

Residues 1–2 are Cytoplasmic-facing; it reads MR. The helical; Signal-anchor for type II membrane protein transmembrane segment at 3-23 threads the bilayer; the sequence is PSVITVAVLFVQSTWASFAFG. At 24-577 the chain is on the vacuolar side; the sequence is NPMSMRNKAH…YIGSISDFED (554 aa). N363, N370, N375, and N399 each carry an N-linked (GlcNAc...) asparagine glycan. Residues 430-460 are disordered; it reads SDYEIDKKKKKKKKNNKKKKKNKRKNIKPGP. A compositionally biased stretch (basic residues) spans 437-456; the sequence is KKKKKKKNNKKKKKNKRKNI. N-linked (GlcNAc...) asparagine glycosylation occurs at N481.

It belongs to the endopolyphosphatase PPN1 family. The cofactor is a divalent metal cation. In terms of processing, processing by proteases in the vacuole may be required for activation.

Its subcellular location is the vacuole membrane. The catalysed reaction is [phosphate](n+1) + n H2O = (n+1) phosphate + n H(+). Its function is as follows. Catalyzes the hydrolysis of inorganic polyphosphate (polyP) chains of many hundreds of phosphate residues into shorter lengths. This Schizosaccharomyces pombe (strain 972 / ATCC 24843) (Fission yeast) protein is Endopolyphosphatase (ppn1).